A 348-amino-acid polypeptide reads, in one-letter code: PDZ and LIM domain protein 2 (348 aa).

A PDZ domain is found at 1–84; the sequence is MALTVDVVGP…PLRLQLDRPQ (84 aa). Residues 67-139 are disordered; that stretch reads SKIRQSPSPL…PPTSPQAPTG (73 aa). A compositionally biased stretch (polar residues) spans 103-118; the sequence is RFQSSRRTHTDSQASL. Serine 117, serine 119, and serine 124 each carry phosphoserine. Threonine 128 and threonine 132 each carry phosphothreonine. Phosphoserine occurs at positions 133, 153, 191, 197, 198, 202, 209, and 262. The tract at residues 165–202 is disordered; the sequence is GGRRGSRQASLSPAGDSAVLVLPPPPSPGARSSSSRLS. Positions 193 to 202 are enriched in low complexity; it reads GARSSSSRLS. The interval 249–275 is disordered; the sequence is ERGGTPAYLPSSLSPQSSLPTSRALAS. Positions 257–270 are enriched in low complexity; it reads LPSSLSPQSSLPTS. The region spanning 280–340 is the LIM zinc-binding domain; sequence HTCEKCNTSI…EKHARQRYSA (61 aa).

Interacts with alpha-actinins ACTN1 and ACTN4, FLNA and MYH9. Interacts (via LIM zinc-binding domain) with MKRN2.

It is found in the cytoplasm. The protein localises to the cytoskeleton. Functionally, probable adapter protein located at the actin cytoskeleton that promotes cell attachment. Necessary for the migratory capacity of epithelial cells. Overexpression enhances cell adhesion to collagen and fibronectin and suppresses anchorage independent growth. May contribute to tumor cell migratory capacity. The polypeptide is PDZ and LIM domain protein 2 (PDLIM2) (Bos taurus (Bovine)).